Reading from the N-terminus, the 953-residue chain is Trafficking kinesin-binding protein 1 (953 aa).

The HAP1 N-terminal domain maps to 47 to 354; the sequence is LEEQLPHYKL…EELKNLRNKT (308 aa). Residues 104–356 adopt a coiled-coil conformation; it reads QMTKTYNDID…LKNLRNKTMP (253 aa). The tract at residues 359 to 509 is interaction with HGS; sequence TSRRYHSLGL…RRLSLRRENY (151 aa). O-linked (GlcNAc) serine glycosylation is present at serine 447. Positions 472–495 are disordered; the sequence is AADLGNDERSKKPGTPGTPGSHDL. The stretch at 492–532 forms a coiled coil; it reads SHDLETALRRLSLRRENYLSERRFFEEEQERKLQELAEKGE. Phosphoserine is present on serine 537. Residues 658–672 form an interaction with OGT region; sequence PGKCMSQTNSTFTFT. O-linked (GlcNAc) serine glycosylation is found at serine 680 and serine 719. Residue serine 719 is modified to Phosphoserine. The tract at residues 777–796 is disordered; that stretch reads VIPSTPPNSPMQTPTSSPPS. Low complexity predominate over residues 786-796; sequence PMQTPTSSPPS. Serine 919 is modified (phosphoserine). A glycan (O-linked (GlcNAc) threonine) is linked at threonine 935.

The protein belongs to the milton family. As to quaternary structure, interacts with RHOT1 and RHOT2. Found in a complex with KIF5B, OGT, RHOT1 and RHOT2. Interacts with HGS. Interacts with GABRA1. Interacts with KIF5C. Interacts with OGT; stable interaction is not required for glycosylation of this protein by OGT. Isoform 1 interacts with OGT. O-glycosylated. Glycosylated by OGT; glycosylation in response to increased extracellular glucose levels is required for and leads to regulation of mitochondrial motility by OGT. In terms of tissue distribution, high expression in spinal cord and moderate expression in all other tissues and specific brain regions examined. Expressed in all cell lines examined.

The protein localises to the cytoplasm. It localises to the nucleus. Its subcellular location is the mitochondrion. The protein resides in the early endosome. It is found in the endosome. The protein localises to the mitochondrion membrane. It localises to the cell cortex. Its function is as follows. Involved in the regulation of endosome-to-lysosome trafficking, including endocytic trafficking of EGF-EGFR complexes and GABA-A receptors. Involved in mitochondrial motility. When O-glycosylated, abolishes mitochondrial motility. Crucial for recruiting OGT to the mitochondrial surface of neuronal processes. TRAK1 and RHOT form an essential protein complex that links KIF5 to mitochondria for light chain-independent, anterograde transport of mitochondria. The chain is Trafficking kinesin-binding protein 1 (TRAK1) from Homo sapiens (Human).